The chain runs to 326 residues: Bifunctional pinoresinol-lariciresinol reductase (326 aa).

NADP(+)-binding positions include 25 to 31, arginine 50, and lysine 59; that span reads GGTGYLG. Catalysis depends on lysine 153, which acts as the Proton acceptor. Arginine 157 provides a ligand contact to NADP(+). Substrate is bound at residue histidine 285.

The protein belongs to the NmrA-type oxidoreductase family. Isoflavone reductase subfamily. As to quaternary structure, dimer.

The enzyme catalyses (+)-lariciresinol + NADP(+) = (+)-pinoresinol + NADPH + H(+). It catalyses the reaction (-)-secoisolariciresinol + NADP(+) = (+)-lariciresinol + NADPH + H(+). In terms of biological role, reductase involved in lignan biosynthesis. Catalyzes the enantioselective conversion of (+)-pinoresinol into (+)-lariciresinol and of (+)-lariciresinol into (-)-secoisolariciresinol. Abstracts the 4R-hydride from the NADPH cofactor during catalysis. The sequence is that of Bifunctional pinoresinol-lariciresinol reductase (PLR1) from Linum album (Flax).